We begin with the raw amino-acid sequence, 482 residues long: 23S rRNA (uracil(1939)-C(5))-methyltransferase RlmD (482 aa).

[4Fe-4S] cluster-binding residues include Cys-85, Cys-95, Cys-98, and Cys-177. S-adenosyl-L-methionine-binding residues include Gln-285, Phe-314, Asn-319, Glu-335, Asn-370, and Asp-391. Cys-438 serves as the catalytic Nucleophile.

The protein belongs to the class I-like SAM-binding methyltransferase superfamily. RNA M5U methyltransferase family. RlmD subfamily.

It catalyses the reaction uridine(1939) in 23S rRNA + S-adenosyl-L-methionine = 5-methyluridine(1939) in 23S rRNA + S-adenosyl-L-homocysteine + H(+). In terms of biological role, catalyzes the formation of 5-methyl-uridine at position 1939 (m5U1939) in 23S rRNA. This Acidovorax sp. (strain JS42) protein is 23S rRNA (uracil(1939)-C(5))-methyltransferase RlmD.